Consider the following 313-residue polypeptide: Protein HEXIM2 (313 aa).

A compositionally biased stretch (polar residues) spans 1-13 (MATVNHTNCNTAS). The interval 1–78 (MATVNHTNCN…RGSRTQSPGG (78 aa)) is disordered. Ser28, Ser52, Ser75, and Ser80 each carry phosphoserine. Residues 64–77 (SSCNIRGSRTQSPG) show a composition bias toward polar residues. Disordered regions lie at residues 111 to 139 (EKQQ…PLAP), 155 to 194 (PNLD…DFSE), and 267 to 313 (QENE…AGDR). Basic and acidic residues predominate over residues 112 to 131 (KQQRDERQSQRASRVREEMF). Residues 139–142 (PYNT) are interaction with P-TEFb. Positions 179–194 (GQGRAHGEFQQRDFSE) are enriched in basic and acidic residues. Residues 207-276 (RSKQELVRDY…QENEMWNREG (70 aa)) adopt a coiled-coil conformation. The interaction with CCNT1, HEXIM1 and HEXIM2 stretch occupies residues 225 to 286 (QAEQETRRLR…GYCDQEKPAS (62 aa)).

The protein belongs to the HEXIM family. Homooligomer and heterooligomer with HEXIM1; probably dimeric. Core component of the 7SK RNP complex, at least composed of 7SK RNA, LARP7, MEPCE, HEXIM1 (or HEXIM2) and P-TEFb (composed of CDK9 and CCNT1/cyclin-T1). Interacts with CCNT2.

The protein localises to the nucleus. Its function is as follows. Transcriptional regulator which functions as a general RNA polymerase II transcription inhibitor. Core component of the 7SK RNP complex: in cooperation with 7SK snRNA sequesters P-TEFb in a large inactive 7SK snRNP complex preventing RNA polymerase II phosphorylation and subsequent transcriptional elongation. The protein is Protein HEXIM2 (Hexim2) of Mus musculus (Mouse).